A 598-amino-acid polypeptide reads, in one-letter code: Membrane protein insertase YidC (598 aa).

A helical transmembrane segment spans residues N7–M27. Positions A37–Q71 are disordered. The segment covering A40 to Q71 has biased composition (low complexity). Helical transmembrane passes span F373 to F393, W447 to I467, L492 to I512, and W538 to W558.

The protein belongs to the OXA1/ALB3/YidC family. Type 1 subfamily. As to quaternary structure, interacts with the Sec translocase complex via SecD. Specifically interacts with transmembrane segments of nascent integral membrane proteins during membrane integration.

The protein resides in the cell inner membrane. In terms of biological role, required for the insertion and/or proper folding and/or complex formation of integral membrane proteins into the membrane. Involved in integration of membrane proteins that insert both dependently and independently of the Sec translocase complex, as well as at least some lipoproteins. Aids folding of multispanning membrane proteins. This Rhizobium etli (strain CIAT 652) protein is Membrane protein insertase YidC.